A 169-amino-acid chain; its full sequence is Sec-independent protein translocase protein TatB (169 aa).

The helical transmembrane segment at 2–22 threads the bilayer; the sequence is SPGIGMPELLVVLVLALVVVG. Positions 106–169 are disordered; the sequence is NQAETDADKA…AKPVDEIKGR (64 aa).

It belongs to the TatB family. The Tat system comprises two distinct complexes: a TatABC complex, containing multiple copies of TatA, TatB and TatC subunits, and a separate TatA complex, containing only TatA subunits. Substrates initially bind to the TatABC complex, which probably triggers association of the separate TatA complex to form the active translocon.

Its subcellular location is the cell inner membrane. In terms of biological role, part of the twin-arginine translocation (Tat) system that transports large folded proteins containing a characteristic twin-arginine motif in their signal peptide across membranes. Together with TatC, TatB is part of a receptor directly interacting with Tat signal peptides. TatB may form an oligomeric binding site that transiently accommodates folded Tat precursor proteins before their translocation. The polypeptide is Sec-independent protein translocase protein TatB (Maricaulis maris (strain MCS10) (Caulobacter maris)).